A 517-amino-acid polypeptide reads, in one-letter code: Putative alpha-L-fucosidase 1 (517 aa).

A signal peptide spans 1–20 (MATILLLLLGLLVGLPLLRA). Residues asparagine 119, asparagine 249, asparagine 296, asparagine 321, asparagine 352, asparagine 496, and asparagine 511 are each glycosylated (N-linked (GlcNAc...) asparagine).

Belongs to the glycosyl hydrolase 29 family.

Its subcellular location is the secreted. It localises to the extracellular space. The protein resides in the apoplast. The enzyme catalyses an alpha-L-fucoside + H2O = L-fucose + an alcohol. Functionally, alpha-L-fucosidase is responsible for hydrolyzing the alpha-1,6-linked fucose joined to the reducing-end N-acetylglucosamine of the carbohydrate moieties of glycoproteins. Active only against 2'-fucosyl-lactitol when heterologously expressed. The chain is Putative alpha-L-fucosidase 1 from Oryza sativa subsp. japonica (Rice).